Reading from the N-terminus, the 239-residue chain is Ribonuclease PH (239 aa).

Residues arginine 86 and 124-126 (GTR) contribute to the phosphate site.

The protein belongs to the RNase PH family. In terms of assembly, homohexameric ring arranged as a trimer of dimers.

It catalyses the reaction tRNA(n+1) + phosphate = tRNA(n) + a ribonucleoside 5'-diphosphate. Its function is as follows. Phosphorolytic 3'-5' exoribonuclease that plays an important role in tRNA 3'-end maturation. Removes nucleotide residues following the 3'-CCA terminus of tRNAs; can also add nucleotides to the ends of RNA molecules by using nucleoside diphosphates as substrates, but this may not be physiologically important. Probably plays a role in initiation of 16S rRNA degradation (leading to ribosome degradation) during starvation. This is Ribonuclease PH from Sinorhizobium medicae (strain WSM419) (Ensifer medicae).